The chain runs to 116 residues: Classical arabinogalactan protein 25 (116 aa).

Positions Met-1 to Ser-28 are cleaved as a signal peptide. Residues Leu-40–Ser-95 are disordered. Low complexity-rich tracts occupy residues Ser-50 to Ser-59 and Asn-69 to Phe-82. Over residues Ala-83–Ser-95 the composition is skewed to pro residues. Residue Ser-89 is the site of GPI-anchor amidated serine attachment. A propeptide spans Pro-90–Leu-116 (removed in mature form).

This sequence belongs to the classical AGP family. O-glycosylated on the hydroxyproline residues.

The protein resides in the cell membrane. Its function is as follows. Proteoglycan that seems to be implicated in diverse developmental roles such as differentiation, cell-cell recognition, embryogenesis and programmed cell death. This Arabidopsis thaliana (Mouse-ear cress) protein is Classical arabinogalactan protein 25 (AGP25).